The primary structure comprises 505 residues: Ent-kaurene oxidase 2 (505 aa).

The chain crosses the membrane as a helical span at residues 3-23 (AFVPGGAGAAAAAVGGFVAAA). Residue C449 participates in heme binding.

Belongs to the cytochrome P450 family. Heme is required as a cofactor. As to expression, widely expressed.

The protein resides in the membrane. It catalyses the reaction ent-kaur-16-ene + 3 reduced [NADPH--hemoprotein reductase] + 3 O2 = ent-kaur-16-en-19-oate + 3 oxidized [NADPH--hemoprotein reductase] + 4 H2O + 4 H(+). Its pathway is plant hormone biosynthesis; gibberellin biosynthesis. Catalyzes three successive oxidations of the 4-methyl group of ent-kaurene giving kaurenoic acid, a key step in gibberellins (GAs) biosynthesis. GAs, which are involved many processes, including stem elongation, play a central role in plant development. The protein is Ent-kaurene oxidase 2 of Oryza sativa subsp. japonica (Rice).